The following is a 217-amino-acid chain: GTP cyclohydrolase 1 (217 aa).

Residues Cys-109, His-112, and Cys-180 each contribute to the Zn(2+) site.

It belongs to the GTP cyclohydrolase I family. As to quaternary structure, toroid-shaped homodecamer, composed of two pentamers of five dimers.

The enzyme catalyses GTP + H2O = 7,8-dihydroneopterin 3'-triphosphate + formate + H(+). Its pathway is cofactor biosynthesis; 7,8-dihydroneopterin triphosphate biosynthesis; 7,8-dihydroneopterin triphosphate from GTP: step 1/1. The protein is GTP cyclohydrolase 1 of Vibrio parahaemolyticus serotype O3:K6 (strain RIMD 2210633).